The primary structure comprises 498 residues: ATP synthase subunit beta, chloroplastic (498 aa).

172 to 179 is an ATP binding site; the sequence is GGAGVGKT.

The protein belongs to the ATPase alpha/beta chains family. F-type ATPases have 2 components, CF(1) - the catalytic core - and CF(0) - the membrane proton channel. CF(1) has five subunits: alpha(3), beta(3), gamma(1), delta(1), epsilon(1). CF(0) has four main subunits: a(1), b(1), b'(1) and c(9-12).

The protein resides in the plastid. Its subcellular location is the chloroplast thylakoid membrane. It catalyses the reaction ATP + H2O + 4 H(+)(in) = ADP + phosphate + 5 H(+)(out). Functionally, produces ATP from ADP in the presence of a proton gradient across the membrane. The catalytic sites are hosted primarily by the beta subunits. The protein is ATP synthase subunit beta, chloroplastic of Oenothera biennis (German evening primrose).